A 66-amino-acid polypeptide reads, in one-letter code: Photosystem II reaction center protein J (66 aa).

A helical membrane pass occupies residues 37–57; sequence LWLVATAGGMAVIFVVGLFFY.

Belongs to the PsbJ family. As to quaternary structure, PSII is composed of 1 copy each of membrane proteins PsbA, PsbB, PsbC, PsbD, PsbE, PsbF, PsbH, PsbI, PsbJ, PsbK, PsbL, PsbM, PsbT, PsbX, PsbY, PsbZ, Psb30/Ycf12, peripheral proteins PsbO, CyanoQ (PsbQ), PsbU, PsbV and a large number of cofactors. It forms dimeric complexes.

It is found in the cellular thylakoid membrane. Its function is as follows. One of the components of the core complex of photosystem II (PSII). PSII is a light-driven water:plastoquinone oxidoreductase that uses light energy to abstract electrons from H(2)O, generating O(2) and a proton gradient subsequently used for ATP formation. It consists of a core antenna complex that captures photons, and an electron transfer chain that converts photonic excitation into a charge separation. The polypeptide is Photosystem II reaction center protein J (Synechococcus sp. (strain CC9311)).